Here is a 362-residue protein sequence, read N- to C-terminus: 3-dehydroquinate synthase (362 aa).

NAD(+) contacts are provided by residues 72–77, 106–110, 130–131, Lys143, Lys152, and 170–173; these read DGEQYK, GVVGD, TT, and CLKT. 3 residues coordinate Zn(2+): Glu185, His248, and His265.

It belongs to the sugar phosphate cyclases superfamily. Dehydroquinate synthase family. Co(2+) serves as cofactor. It depends on Zn(2+) as a cofactor. NAD(+) is required as a cofactor.

Its subcellular location is the cytoplasm. It catalyses the reaction 7-phospho-2-dehydro-3-deoxy-D-arabino-heptonate = 3-dehydroquinate + phosphate. The protein operates within metabolic intermediate biosynthesis; chorismate biosynthesis; chorismate from D-erythrose 4-phosphate and phosphoenolpyruvate: step 2/7. Its function is as follows. Catalyzes the conversion of 3-deoxy-D-arabino-heptulosonate 7-phosphate (DAHP) to dehydroquinate (DHQ). In Aliivibrio fischeri (strain ATCC 700601 / ES114) (Vibrio fischeri), this protein is 3-dehydroquinate synthase.